The primary structure comprises 85 residues: Cloacin immunity protein (85 aa).

Position 12 is an N6-methyllysine (lysine 12).

Belongs to the cloacin immunity protein family.

This protein complexes with cloacin protein in equimolar amounts and inhibits it by binding with high affinity to the C-terminal catalytic domain of cloacin. The chain is Cloacin immunity protein (cim) from Escherichia coli.